Here is a 186-residue protein sequence, read N- to C-terminus: Small ribosomal subunit protein uS5 (186 aa).

The 64-residue stretch at 20–83 folds into the S5 DRBM domain; that stretch reads FVDKLVHINR…EAAKRDMIFV (64 aa).

Belongs to the universal ribosomal protein uS5 family. As to quaternary structure, part of the 30S ribosomal subunit. Contacts proteins S4 and S8.

With S4 and S12 plays an important role in translational accuracy. In terms of biological role, located at the back of the 30S subunit body where it stabilizes the conformation of the head with respect to the body. This chain is Small ribosomal subunit protein uS5, found in Brucella ovis (strain ATCC 25840 / 63/290 / NCTC 10512).